The primary structure comprises 138 residues: Basic phospholipase A2 BP-III (138 aa).

The N-terminal stretch at 1–16 (MRTLWIMAVLLVGVDG) is a signal peptide. Cystine bridges form between Cys42–Cys132, Cys44–Cys60, Cys59–Cys112, Cys65–Cys138, Cys66–Cys105, Cys73–Cys98, and Cys91–Cys103. Residues Gly45 and Gly47 each coordinate Ca(2+). The active site involves His63. Asp106 is an active-site residue.

This sequence belongs to the phospholipase A2 family. Group II subfamily. K49 sub-subfamily. Ca(2+) serves as cofactor. Expressed by the venom gland.

The protein localises to the secreted. The enzyme catalyses a 1,2-diacyl-sn-glycero-3-phosphocholine + H2O = a 1-acyl-sn-glycero-3-phosphocholine + a fatty acid + H(+). In terms of biological role, snake venom phospholipase A2 (PLA2) that has low phospholipase A2 activity. Shows anticoagulant activities, strong myolytic activity, infiltration of polymorphonuclear cells, and edema in stromal tissues. Induces cell death of Jurkat cells in a concentration dependent manner. PLA2 catalyzes the calcium-dependent hydrolysis of the 2-acyl groups in 3-sn-phosphoglycerides. This Protobothrops flavoviridis (Habu) protein is Basic phospholipase A2 BP-III.